Consider the following 102-residue polypeptide: Fe-S protein maturation auxiliary factor YitW (102 aa).

Belongs to the MIP18 family.

Its function is as follows. Involved in the maturation of iron-sulfur (Fe-S) proteins. May function as a Fe-S cluster carrier. This chain is Fe-S protein maturation auxiliary factor YitW (yitW), found in Bacillus subtilis (strain 168).